Here is a 498-residue protein sequence, read N- to C-terminus: ATP synthase subunit alpha 1 (498 aa).

This sequence belongs to the ATPase alpha/beta chains family. As to quaternary structure, F-type ATPases have 2 components, CF(1) - the catalytic core - and CF(0) - the membrane proton channel. CF(1) has five subunits: alpha(3), beta(3), gamma(1), delta(1), epsilon(1). CF(0) has three main subunits: a(1), b(2) and c(9-12). The alpha and beta chains form an alternating ring which encloses part of the gamma chain. CF(1) is attached to CF(0) by a central stalk formed by the gamma and epsilon chains, while a peripheral stalk is formed by the delta and b chains.

Its subcellular location is the cell membrane. It carries out the reaction ATP + H2O + 4 H(+)(in) = ADP + phosphate + 5 H(+)(out). Its function is as follows. Produces ATP from ADP in the presence of a proton gradient across the membrane. The alpha chain is a regulatory subunit. The sequence is that of ATP synthase subunit alpha 1 from Listeria monocytogenes serovar 1/2a (strain ATCC BAA-679 / EGD-e).